Reading from the N-terminus, the 309-residue chain is Transcriptional regulator HilD (309 aa).

The region spanning 209–306 is the HTH araC/xylS-type domain; it reads ERVYNIISSS…KTTPSTFIKM (98 aa). DNA-binding regions (H-T-H motif) lie at residues 226–247 and 273–296; these read TDVADHIFMSTSTLKRKLAEEG and VNAVALKCGYDSTSYFIQCFKKYF.

This chain is Transcriptional regulator HilD (hilD), found in Salmonella typhimurium (strain SL1344).